Here is a 104-residue protein sequence, read N- to C-terminus: uncharacterized protein (104 aa).

2 helical membrane passes run 16-36 and 44-64; these read LAFF…LASY and GGFG…FLCI.

The protein resides in the cell membrane. This is an uncharacterized protein from Bacillus anthracis.